The chain runs to 503 residues: Zinc metalloproteinase nas-14 (503 aa).

An N-terminal signal peptide occupies residues 1-25; sequence MRLLYSLFHCSAFLVGFTLSVGVLP. The 197-residue stretch at 116 to 312 folds into the Peptidase M12A domain; sequence NLVTYPDKLW…KKVNKLYQCG (197 aa). Intrachain disulfides connect C158–C311 and C182–C202. N-linked (GlcNAc...) asparagine glycosylation occurs at N192. H210 is a binding site for Zn(2+). The active site involves E211. Residues H214 and H220 each contribute to the Zn(2+) site. Residues 317-340 show a composition bias toward low complexity; the sequence is TSSTTTTTTTTTTTTTTEEPTTTT. Residues 317-377 form a disordered region; it reads TSSTTTTTTT…TPKPVERSRN (61 aa). Over residues 342-351 the composition is skewed to basic and acidic residues; it reads VEEKPKDKKV. Residues 352 to 370 show a composition bias toward low complexity; the sequence is SSTTTTTKKPTTTTTTTPK. Disulfide bonds link C380–C414, C387–C407, and C396–C411. Residues 380–414 form the ShKT 1 domain; the sequence is CEDLNAHCGMWEQLGHCQHSVKYMAHYCRKACNLC. The disordered stretch occupies residues 422 to 464; that stretch reads TTTTPKPVPRNKEKENKSASSTTRGTSTATSTTPKTTTTTTSA. An N-linked (GlcNAc...) asparagine glycan is attached at N437. Positions 439-464 are enriched in low complexity; that stretch reads SASSTTRGTSTATSTTPKTTTTTTSA. 3 cysteine pairs are disulfide-bonded: C469-C503, C476-C496, and C485-C500. A ShKT 2 domain is found at 469–503; that stretch reads CEDKNLFCSYWAKIGECNSESKFMKIFCKASCGKC.

Zn(2+) is required as a cofactor. Expressed in pharyngeal muscles and mc cells.

It localises to the secreted. Functionally, metalloprotease. The protein is Zinc metalloproteinase nas-14 (nas-14) of Caenorhabditis elegans.